The primary structure comprises 522 residues: Tetratricopeptide repeat protein 39C (522 aa).

TPR repeat units follow at residues 254-287 (SLFMFFKGRIQRLECQINSALTSFHTALELAVDQ), 292-325 (HVCLYEIGWCSMIELNFKDAFDSFERLKNESRWS), and 424-457 (GLKHLLLGAIHKCLGNSQDAVQFFQRAAKDESCR).

It belongs to the TTC39 family.

In Rattus norvegicus (Rat), this protein is Tetratricopeptide repeat protein 39C (Ttc39c).